Consider the following 36-residue polypeptide: Photosystem I reaction center subunit VIII (36 aa).

A helical transmembrane segment spans residues Leu6 to Leu26.

It belongs to the PsaI family.

The protein resides in the plastid. The protein localises to the chloroplast thylakoid membrane. Functionally, may help in the organization of the PsaL subunit. In Liriodendron tulipifera (Tuliptree), this protein is Photosystem I reaction center subunit VIII.